Reading from the N-terminus, the 95-residue chain is Co-chaperonin GroES (95 aa).

It belongs to the GroES chaperonin family. In terms of assembly, heptamer of 7 subunits arranged in a ring. Interacts with the chaperonin GroEL.

It localises to the cytoplasm. Functionally, together with the chaperonin GroEL, plays an essential role in assisting protein folding. The GroEL-GroES system forms a nano-cage that allows encapsulation of the non-native substrate proteins and provides a physical environment optimized to promote and accelerate protein folding. GroES binds to the apical surface of the GroEL ring, thereby capping the opening of the GroEL channel. This is Co-chaperonin GroES from Pelodictyon phaeoclathratiforme (strain DSM 5477 / BU-1).